The primary structure comprises 634 residues: Chaperone protein HtpG (634 aa).

The a; substrate-binding stretch occupies residues 1-342 (MTVETDKQTL…SSDLSLNVSR (342 aa)). The segment at 343-559 (EILQSGPVVD…QGDLGLQMRQ (217 aa)) is b. Residues 560-634 (LLEASGQAVP…LNKLLLELSA (75 aa)) form a c region.

This sequence belongs to the heat shock protein 90 family. Homodimer.

The protein resides in the cytoplasm. Functionally, molecular chaperone. Has ATPase activity. In Xanthomonas axonopodis pv. citri (strain 306), this protein is Chaperone protein HtpG.